Consider the following 369-residue polypeptide: UDP-N-acetylglucosamine--N-acetylmuramyl-(pentapeptide) pyrophosphoryl-undecaprenol N-acetylglucosamine transferase (369 aa).

Residues 15-17 (TGG), asparagine 126, arginine 169, serine 197, and glutamine 299 contribute to the UDP-N-acetyl-alpha-D-glucosamine site.

Belongs to the glycosyltransferase 28 family. MurG subfamily.

It localises to the cell inner membrane. It carries out the reaction di-trans,octa-cis-undecaprenyl diphospho-N-acetyl-alpha-D-muramoyl-L-alanyl-D-glutamyl-meso-2,6-diaminopimeloyl-D-alanyl-D-alanine + UDP-N-acetyl-alpha-D-glucosamine = di-trans,octa-cis-undecaprenyl diphospho-[N-acetyl-alpha-D-glucosaminyl-(1-&gt;4)]-N-acetyl-alpha-D-muramoyl-L-alanyl-D-glutamyl-meso-2,6-diaminopimeloyl-D-alanyl-D-alanine + UDP + H(+). It functions in the pathway cell wall biogenesis; peptidoglycan biosynthesis. Functionally, cell wall formation. Catalyzes the transfer of a GlcNAc subunit on undecaprenyl-pyrophosphoryl-MurNAc-pentapeptide (lipid intermediate I) to form undecaprenyl-pyrophosphoryl-MurNAc-(pentapeptide)GlcNAc (lipid intermediate II). This is UDP-N-acetylglucosamine--N-acetylmuramyl-(pentapeptide) pyrophosphoryl-undecaprenol N-acetylglucosamine transferase from Methylobacterium radiotolerans (strain ATCC 27329 / DSM 1819 / JCM 2831 / NBRC 15690 / NCIMB 10815 / 0-1).